The primary structure comprises 181 residues: Insulin-like growth factor 2 (181 aa).

The first 24 residues, Met-1 to Ala-24, serve as a signal peptide directing secretion. A b region spans residues Ala-25 to Phe-52. 3 disulfides stabilise this stretch: Cys-33–Cys-71, Cys-45–Cys-84, and Cys-70–Cys-75. A c region spans residues Ser-53–Arg-64. The tract at residues Gly-65 to Ala-85 is a. Residues Thr-86–Glu-91 are d. The propeptide at Arg-92–Gln-181 is e peptide. A glycan (O-linked (GalNAc...) threonine) is linked at Thr-163.

It belongs to the insulin family. Interacts with MYORG; this interaction is required for IGF2 secretion. Interacts with integrins ITGAV:ITGB3 and ITGA6:ITGB4; integrin-binding is required for IGF2 signaling. Interacts with IGFBP2. Proteolytically processed by PCSK4, proIGF2 is cleaved at Arg-128 and Arg-92 to generate big-IGF2 and mature IGF2.

It localises to the secreted. Its function is as follows. The insulin-like growth factors possess growth-promoting activity. Major fetal growth hormone in mammals. Plays a key role in regulating fetoplacental development. IGF2 is influenced by placental lactogen. Also involved in tissue differentiation. In adults, involved in glucose metabolism in adipose tissue, skeletal muscle and liver. Acts as a ligand for integrin which is required for IGF2 signaling. Positively regulates myogenic transcription factor MYOD1 function by facilitating the recruitment of transcriptional coactivators, thereby controlling muscle terminal differentiation. Inhibits myoblast differentiation and modulates metabolism via increasing the mitochondrial respiration rate. Functionally, preptin undergoes glucose-mediated co-secretion with insulin, and acts as a physiological amplifier of glucose-mediated insulin secretion. Exhibits osteogenic properties by increasing osteoblast mitogenic activity through phosphoactivation of MAPK1 and MAPK3. The chain is Insulin-like growth factor 2 from Equus caballus (Horse).